The primary structure comprises 298 residues: U1 small nuclear ribonucleoprotein A (298 aa).

2 consecutive RRM domains span residues 2-113 (SALY…KART) and 227-298 (KVLL…GFAK).

This sequence belongs to the RRM U1 A/B'' family. Component of the spliceosome where it is associated with snRNP U1.

It localises to the nucleus. Its function is as follows. Involved in nuclear mRNA splicing. The principal role of the U1A is to help fold or maintain U1 RNA in an active configuration. It is the first snRNP to interact with pre-mRNA. This interaction is required for the subsequent binding of U2 snRNP and the U4/U6/U5 tri-snRNP. The protein is U1 small nuclear ribonucleoprotein A (MUD1) of Saccharomyces cerevisiae (strain ATCC 204508 / S288c) (Baker's yeast).